A 199-amino-acid chain; its full sequence is MARCKS-related protein (199 aa).

Positions 1–199 (MGSQSSKAPR…PTPAGAEQNE (199 aa)) are disordered. Residue Gly-2 is the site of N-myristoyl glycine attachment. The residue at position 14 (Thr-14) is a Phosphothreonine. Residues 16–26 (EEAAGASPAKA) are compositionally biased toward low complexity. A phosphoserine mark is found at Ser-22, Ser-36, and Ser-48. Residues 53 to 64 (GTDEAAGATGDA) show a composition bias toward low complexity. Ser-71 carries the post-translational modification Phosphoserine. A compositionally biased stretch (basic and acidic residues) spans 76 to 85 (AKGDAPPKET). Thr-85 is subject to Phosphothreonine. The segment covering 86–98 (PKKKKKFSFKKPF) has biased composition (basic residues). Residues 87–110 (KKKKKFSFKKPFKLSGLSFKRNRK) are effector domain involved in lipid-binding and calmodulin-binding. Ser-93, Ser-101, and Ser-104 each carry phosphoserine; by PKC. At Ser-119 the chain carries Phosphoserine. Phosphoserine; by MAPK8 is present on Ser-120. Ser-135 carries the phosphoserine modification. The residue at position 148 (Thr-148) is a Phosphothreonine; by MAPK8. Residue Ser-151 is modified to Phosphoserine. A compositionally biased stretch (low complexity) spans 156–167 (AKGAEAGAACKG). A Phosphothreonine modification is found at Thr-170. Residues 181–199 (STPSGPESGPTPAGAEQNE) are compositionally biased toward low complexity. At Thr-182 the chain carries Phosphothreonine; by MAPK8. Thr-191 is modified (phosphothreonine).

This sequence belongs to the MARCKS family. In terms of assembly, binds to filamentous actin (F-actin), but not to monomeric G-actin, independently of its phosphorylation status. Interacts with calmodulin. Post-translationally, phosphorylated. Phosphorylation at Ser-120 and Thr-182 is non-redundantly catalyzed by MAPK8 in vivo. Phosphorylation at Thr-148 is preferentially catalyzed by MAPK8 in vivo, but this modification can also be catalyzed by other kinases in the absence of MAPK8. May be phosphorylated by protein kinase C, which disrupts the interaction with calmodulin.

It is found in the cytoplasm. The protein localises to the cytoskeleton. Its subcellular location is the cell membrane. Its function is as follows. Controls cell movement by regulating actin cytoskeleton homeostasis and filopodium and lamellipodium formation. When unphosphorylated, induces cell migration. When phosphorylated by MAPK8, induces actin bundles formation and stabilization, thereby reducing actin plasticity, hence restricting cell movement, including neuronal migration. May be involved in coupling the protein kinase C and calmodulin signal transduction systems. The polypeptide is MARCKS-related protein (MARCKSL1) (Oryctolagus cuniculus (Rabbit)).